The primary structure comprises 400 residues: Dihydrolipoyllysine-residue succinyltransferase component of 2-oxoglutarate dehydrogenase complex (400 aa).

Residues Gly2 to Asn77 enclose the Lipoyl-binding domain. Position 43 is an N6-lipoyllysine (Lys43). A compositionally biased stretch (polar residues) spans Asn85–Gln97. Positions Asn85–Thr113 are disordered. The Peripheral subunit-binding (PSBD) domain maps to Thr113–Met150. Catalysis depends on residues His371 and Asp375.

This sequence belongs to the 2-oxoacid dehydrogenase family. Forms a 24-polypeptide structural core with octahedral symmetry. Part of the 2-oxoglutarate dehydrogenase (OGDH) complex composed of E1 (2-oxoglutarate dehydrogenase), E2 (dihydrolipoamide succinyltransferase) and E3 (dihydrolipoamide dehydrogenase); the complex contains multiple copies of the three enzymatic components (E1, E2 and E3). (R)-lipoate serves as cofactor.

The enzyme catalyses N(6)-[(R)-dihydrolipoyl]-L-lysyl-[protein] + succinyl-CoA = N(6)-[(R)-S(8)-succinyldihydrolipoyl]-L-lysyl-[protein] + CoA. It participates in amino-acid degradation; L-lysine degradation via saccharopine pathway; glutaryl-CoA from L-lysine: step 6/6. E2 component of the 2-oxoglutarate dehydrogenase (OGDH) complex which catalyzes the second step in the conversion of 2-oxoglutarate to succinyl-CoA and CO(2). This Rickettsia bellii (strain RML369-C) protein is Dihydrolipoyllysine-residue succinyltransferase component of 2-oxoglutarate dehydrogenase complex (sucB).